We begin with the raw amino-acid sequence, 628 residues long: Venom redulysin 1 (628 aa).

Residues 1 to 19 form the signal peptide; it reads MSKLWLLLLLVAAFQAVHS. The propeptide occupies 20-368; sequence YPAAESDYLE…EDDVAESDEE (349 aa). The tract at residues 290–313 is disordered; sequence DYEEEEEEEEEEEFELEEDYEEDP. Residues 291–313 are compositionally biased toward acidic residues; sequence YEEEEEEEEEEEFELEEDYEEDP.

Belongs to the redulysin-like family. Post-translationally, contains 5 disulfide bonds. In terms of tissue distribution, expressed by the venom gland (posterior main gland) (at protein level).

It localises to the secreted. Highly abundant protein that may be responsible for the observed disruption of sensory neuron membranes, since it is homologous to proteins such as trialysin, which forms pores in lipid bilayers. Probable insecticidal toxin. The chain is Venom redulysin 1 from Platymeris rhadamanthus (Red spot assassin bug).